Reading from the N-terminus, the 1066-residue chain is Isoleucine--tRNA ligase (1066 aa).

The 'HIGH' region signature appears at 47–57 (PYTTGYIHLGT). The short motif at 594–598 (KMSKS) is the 'KMSKS' region element. An ATP-binding site is contributed by K597.

The protein belongs to the class-I aminoacyl-tRNA synthetase family. IleS type 2 subfamily. Monomer. Requires Zn(2+) as cofactor.

The protein localises to the cytoplasm. It carries out the reaction tRNA(Ile) + L-isoleucine + ATP = L-isoleucyl-tRNA(Ile) + AMP + diphosphate. Catalyzes the attachment of isoleucine to tRNA(Ile). As IleRS can inadvertently accommodate and process structurally similar amino acids such as valine, to avoid such errors it has two additional distinct tRNA(Ile)-dependent editing activities. One activity is designated as 'pretransfer' editing and involves the hydrolysis of activated Val-AMP. The other activity is designated 'posttransfer' editing and involves deacylation of mischarged Val-tRNA(Ile). The sequence is that of Isoleucine--tRNA ligase from Methanocorpusculum labreanum (strain ATCC 43576 / DSM 4855 / Z).